Consider the following 728-residue polypeptide: Meiotic sister-chromatid recombination protein 3 (728 aa).

Disordered regions lie at residues 33 to 171 (QLSA…GRTQ), 236 to 261 (NETD…LNVE), 300 to 335 (PTHQ…EAEA), 363 to 403 (SDNA…VKSN), 422 to 454 (SAPH…ANTG), 495 to 514 (VGVS…QHYL), and 561 to 728 (YGYQ…KSSR). Residues 35-46 (SAAAASAASAAS) show a composition bias toward low complexity. Over residues 48 to 58 (DRTNYSRSHSL) the composition is skewed to polar residues. A phosphoserine mark is found at Ser57 and Ser64. A compositionally biased stretch (low complexity) spans 80–93 (STSSAAPPTSRAAA). 3 stretches are compositionally biased toward polar residues: residues 95–106 (QYSQKTYSLRSQ), 118–132 (YTTN…TSGA), and 140–171 (KNKS…GRTQ). 3 positions are modified to phosphoserine: Ser127, Ser151, and Ser155. Basic and acidic residues predominate over residues 251–261 (HLQDDSELNVE). Residues 309 to 326 (IHNKRKQASTTRRKKRPP) are compositionally biased toward basic residues. Position 363 is a phosphoserine (Ser363). Polar residues-rich tracts occupy residues 363–373 (SDNASAPLGSN) and 385–403 (TLRS…VKSN). Residues 590–634 (EGVTTAKPSSNEGVMTNPVVTDSPSPLQQQIDSTTASSNGQSQGN) are compositionally biased toward polar residues. The segment covering 635 to 646 (VPTSAVASTTRT) has biased composition (low complexity). Thr646 is modified (phosphothreonine). 3 stretches are compositionally biased toward polar residues: residues 654-668 (NLKS…QTPQ), 675-684 (DPTTSSTNEL), and 691-708 (MVTS…TQDP). Phosphoserine is present on Ser660. Residues 711-728 (KHKKSSFFTKLFKKKSSR) show a composition bias toward basic residues.

It is found in the cell membrane. Its function is as follows. May be involved in the control of meiotic sister-chromatid recombination. The protein is Meiotic sister-chromatid recombination protein 3 (MSC3) of Saccharomyces cerevisiae (strain ATCC 204508 / S288c) (Baker's yeast).